A 952-amino-acid polypeptide reads, in one-letter code: UvrABC system protein A (952 aa).

Position 38 to 45 (38 to 45 (GLSGSGKS)) interacts with ATP. The segment at 258 to 285 (CNECGFSIPELEPRFFSFNSPVGACKSC) adopts a C4-type zinc-finger fold. 2 ABC transporter domains span residues 315–596 (FRSV…KKSI) and 616–945 (GNGK…LFLE). An ATP-binding site is contributed by 648 to 655 (GVSGSGKS). The C4-type zinc-finger motif lies at 747–773 (CENCSGDGLIKIEMHFLPDVFVKCESC).

Belongs to the ABC transporter superfamily. UvrA family. As to quaternary structure, forms a heterotetramer with UvrB during the search for lesions.

The protein localises to the cytoplasm. Its function is as follows. The UvrABC repair system catalyzes the recognition and processing of DNA lesions. UvrA is an ATPase and a DNA-binding protein. A damage recognition complex composed of 2 UvrA and 2 UvrB subunits scans DNA for abnormalities. When the presence of a lesion has been verified by UvrB, the UvrA molecules dissociate. This is UvrABC system protein A from Malacoplasma penetrans (strain HF-2) (Mycoplasma penetrans).